Reading from the N-terminus, the 325-residue chain is GMP reductase (325 aa).

Catalysis depends on cysteine 174, which acts as the Thioimidate intermediate. An NADP(+)-binding site is contributed by 203-226 (IIADGGIRTHGDIAKSVRFGATMV).

This sequence belongs to the IMPDH/GMPR family. GuaC type 2 subfamily.

It carries out the reaction IMP + NH4(+) + NADP(+) = GMP + NADPH + 2 H(+). Functionally, catalyzes the irreversible NADPH-dependent deamination of GMP to IMP. It functions in the conversion of nucleobase, nucleoside and nucleotide derivatives of G to A nucleotides, and in maintaining the intracellular balance of A and G nucleotides. This Enterococcus faecalis (strain ATCC 700802 / V583) protein is GMP reductase.